The following is a 163-amino-acid chain: Nucleotide-binding protein BLi01194 (163 aa).

This sequence belongs to the YajQ family.

Functionally, nucleotide-binding protein. The chain is Nucleotide-binding protein BLi01194 from Bacillus licheniformis (strain ATCC 14580 / DSM 13 / JCM 2505 / CCUG 7422 / NBRC 12200 / NCIMB 9375 / NCTC 10341 / NRRL NRS-1264 / Gibson 46).